The primary structure comprises 443 residues: Enolase (443 aa).

(2R)-2-phosphoglycerate is bound at residue glutamine 167. Residue glutamate 209 is the Proton donor of the active site. Mg(2+) contacts are provided by aspartate 246, glutamate 291, and aspartate 318. Lysine 343, arginine 372, serine 373, and lysine 394 together coordinate (2R)-2-phosphoglycerate. Catalysis depends on lysine 343, which acts as the Proton acceptor.

It belongs to the enolase family. As to quaternary structure, component of the RNA degradosome, a multiprotein complex involved in RNA processing and mRNA degradation. It depends on Mg(2+) as a cofactor.

Its subcellular location is the cytoplasm. It localises to the secreted. The protein localises to the cell surface. The catalysed reaction is (2R)-2-phosphoglycerate = phosphoenolpyruvate + H2O. Its pathway is carbohydrate degradation; glycolysis; pyruvate from D-glyceraldehyde 3-phosphate: step 4/5. Its function is as follows. Catalyzes the reversible conversion of 2-phosphoglycerate (2-PG) into phosphoenolpyruvate (PEP). It is essential for the degradation of carbohydrates via glycolysis. This chain is Enolase, found in Wigglesworthia glossinidia brevipalpis.